The primary structure comprises 21 residues: Peptide PGLa-BM2 (21 aa).

At Ala-21 the chain carries Alanine amide.

Expressed by the skin glands.

It is found in the secreted. Its function is as follows. Antimicrobial peptide. This is Peptide PGLa-BM2 from Xenopus boumbaensis (Mawa clawed frog).